Reading from the N-terminus, the 1321-residue chain is MFKRGSNRATSSSQGQQPENPPSLKYQSSSSRYSFHRQYNTGFGTSPFRISPKYKPDSRTPFSFDGTGNVGPESSLNEEESNARWRPSESSFDKRRTFHGAKYSLSIGKEVSSIDKINSPESRSLIIAGKSHLGIYTFDEDSKTITNVHDFLQTAKTNTGITKNTSSTLRRTTKKISTISDVKAGFYNHKNYVAICGTSTSVAIYDINKTSAIDNPVVTSLSEHTRSINSVDFNMVQTSLLISGGQDGCIKIWDLRSPKISTTRSDVSINTGSDSIRDVKWMPSYEFSNDTNGLSNRHFKFASVHDSGLLLKFDLRQPNQAEKKINAHSGPALCLNWHPHQDYIISGGRDGKCCLWYVGDKSNQVGNISSTNLNSSNPATHNLSSSYPLGLSNTLAFPELTINTARSMNKLKFRPKYETNVFNSLIGTSSMGEDSDVSVYSLARKYIPKNVIASSAPSVGFVWWDDDTIFNIDKQNTVTGWDISHEPTVLDNLPKNTIKWRDLDGDGILFLDQKPGGYLSQEETVLTPGSGENRKMPFTHRMSSATANSFTGGNNPNITSNTSSSAASFSKNPTLGMSQLHQGNVLGERSTMSKHAQSVNSKFSPSVNSSPWTNPYSSPHHNSIVSGSESALHAVNDSFLQSPYLIGLDFPHILNTIRNTRLAEFNRKVESAALLELKSSPTEVFKFLARELKFSYKYNSIETKDNGRELDSSSTHGSVDSKTNLMEKLGLSENNTWTHLIKYTKSHDSDEVISKGTELKTPVSDKSANIEKSATNHKAETNQDENSSCINSSNQVKTKNLIELITLCDKNAEIYIMLEDFSNYKIWLLMRDSLLWDLKVLTESMAVDVTADQEVNDQSSIDQPWKKNDSFTSLKEARQASVASGYSSYSATDLSSSVNTNNRHSFNEPTHLTQTPPVSHLKAQLQGSKETTTISRADSIQNSLQNDIIEIRKLRQSHGDRAELAIDEEEEGEEREELTKRAFEEDENNKQFINIPRRESGPSALMPSPSHVSSQSEIPSNPENHHQPRRPRTSFIDSFMSQLRSPGSSNVDADRESTGSKKSSMPSFSSSAATFLNSKKSQNANHNKLKSATEVSDILESEFATQKSWNGSVAKTTTQMSGITALMNETKKLENTITPPWSSRRLIHQLYEQSVASGNILLTMAILLLFQDMFQLVDTETVKNSIAEFTELLHRYELFEIAAELMKNCPYEDISSSSAGFSSIQLFCDKCNKPLVNESSKEKIIKERLEGNSSAMSRFGYWYCDSCSKRNTLCCFCNKPMKSLAISMLNCGHEGHFECLKKWFFDENMDVCPLGCPAILF.

Residues 1–91 (MFKRGSNRAT…NARWRPSESS (91 aa)) are disordered. Residues 7-18 (NRATSSSQGQQP) show a composition bias toward polar residues. Low complexity predominate over residues 23 to 33 (SLKYQSSSSRY). Positions 81-91 (SNARWRPSESS) are enriched in basic and acidic residues. 7 WD repeats span residues 109–148 (KEVS…ITNV), 174–215 (KKIS…AIDN), 223–263 (EHTR…ISTT), 271–323 (TGSD…QAEK), 327–366 (AHSG…NQVG), 403–450 (NTAR…IPKN), and 453–491 (ASSA…TVLD). 2 disordered regions span residues 546-574 (TANS…KNPT) and 589-611 (RSTM…NSSP). Residues 551–574 (TGGNNPNITSNTSSSAASFSKNPT) show a composition bias toward low complexity. The segment covering 593-611 (SKHAQSVNSKFSPSVNSSP) has biased composition (polar residues). The WD 8 repeat unit spans residues 797-837 (KTKNLIELITLCDKNAEIYIMLEDFSNYKIWLLMRDSLLWD). 2 disordered regions span residues 893-917 (DLSS…QTPP) and 957-1069 (SHGD…PSFS). Residues 898–917 (VNTNNRHSFNEPTHLTQTPP) are compositionally biased toward polar residues. A compositionally biased stretch (acidic residues) spans 965-976 (AIDEEEEGEERE). Composition is skewed to polar residues over residues 1010-1022 (SHVS…PSNP) and 1035-1051 (FIDS…SSNV). The segment covering 1060 to 1069 (SKKSSMPSFS) has biased composition (low complexity). One copy of the WD 9 repeat lies at 1108-1151 (SWNGSVAKTTTQMSGITALMNETKKLENTITPPWSSRRLIHQLY). The RING-type; degenerate zinc-finger motif lies at 1274–1316 (CCFCNKPMKSLAISMLNCGHEGHFECLKKWFFDENMDVCPLGC).

The protein belongs to the WD repeat RTC1 family.

It localises to the vacuole. In terms of biological role, may be involved in a process influencing telomere capping. This is Restriction of telomere capping protein 1 (RTC1) from Kluyveromyces lactis (strain ATCC 8585 / CBS 2359 / DSM 70799 / NBRC 1267 / NRRL Y-1140 / WM37) (Yeast).